Consider the following 673-residue polypeptide: MAAAMEMAANPGGSGTCSDALFRELWHACAGPLVTVPKRGERVYYFPQGHMEQLEASTNQQLDQYLPMFNLPSKILCSVVNVELRAEADSDEVYAQIMLQPEADQSELTSLDPELQDLEKCTAHSFCKTLTASDTSTHGGFSVLRRHAEECLPQLDMSQNPPCQELVAKDLHGTEWHFRHIFRGQPRRHLLTTGWSVFVSSKRLVAGDAFIFLRGESGELRVGVRRLMRQVNNMPSSVISSHSMHLGVLATASHAISTGTLFSVFYKPRTSRSEFVVSVNKYLEAKKQNLSVGMRFKMRFEGDEAPERRFSGTIIGIGSVPAMSKSPWADSDWKSLKVQWDEPSAIVRPDRVSPWELEPLDASNPQPPQPPLRNKRARPPASPSVVAELPPSFGLWKPPSEAAQTLSFSEPQRAREIFPSIPASIFSASSHVEFNSKNEPSILSNQFYWSMRDSKTDSFSASTNKTRVERKQEPTTMGCRLFGIEISSAVEEALPAATVSGVGYDQTVLSVDVDSDQISQPSNGNKSDAPGTSSERSPLESQSRQVRSCTKVIMQGMAVGRAVDLTKLNGYGDLRSKLEEMFDIQGDLCPTLKRWQVVYTDDEDDMMLVGDDPWDEFCSMVKRIYIYSYEEAKLLAPKSKLPVIGDTIKLSSMNSSHESVDLDNHASVTNRDC.

The TF-B3 DNA-binding region spans 126 to 228; sequence FCKTLTASDT…ELRVGVRRLM (103 aa). 2 disordered regions span residues 356-386 and 514-545; these read ELEPLDASNPQPPQPPLRNKRARPPASPSVV and DSDQISQPSNGNKSDAPGTSSERSPLESQSRQ. Residues 516–545 are compositionally biased toward polar residues; the sequence is DQISQPSNGNKSDAPGTSSERSPLESQSRQ. In terms of domain architecture, PB1 spans 547-639; the sequence is RSCTKVIMQG…EEAKLLAPKS (93 aa).

The protein belongs to the ARF family. In terms of assembly, homodimers and heterodimers. Expressed in roots, culms, leaves and young panicles.

It localises to the nucleus. Auxin response factors (ARFs) are transcriptional factors that bind specifically to the DNA sequence 5'-TGTCTC-3' found in the auxin-responsive promoter elements (AuxREs). This Oryza sativa subsp. japonica (Rice) protein is Auxin response factor 9 (ARF9).